We begin with the raw amino-acid sequence, 398 residues long: 1-deoxy-D-xylulose 5-phosphate reductoisomerase (398 aa).

NADPH-binding residues include Thr11, Gly12, Ser13, Ile14, and Asn125. Lys126 is a binding site for 1-deoxy-D-xylulose 5-phosphate. Position 127 (Glu127) interacts with NADPH. Asp151 is a Mn(2+) binding site. 1-deoxy-D-xylulose 5-phosphate-binding residues include Ser152, Glu153, Ser186, and His209. Residue Glu153 participates in Mn(2+) binding. Gly215 contacts NADPH. Positions 222, 227, 228, and 231 each coordinate 1-deoxy-D-xylulose 5-phosphate. Glu231 serves as a coordination point for Mn(2+).

It belongs to the DXR family. The cofactor is Mg(2+). Mn(2+) is required as a cofactor.

The catalysed reaction is 2-C-methyl-D-erythritol 4-phosphate + NADP(+) = 1-deoxy-D-xylulose 5-phosphate + NADPH + H(+). It participates in isoprenoid biosynthesis; isopentenyl diphosphate biosynthesis via DXP pathway; isopentenyl diphosphate from 1-deoxy-D-xylulose 5-phosphate: step 1/6. Functionally, catalyzes the NADPH-dependent rearrangement and reduction of 1-deoxy-D-xylulose-5-phosphate (DXP) to 2-C-methyl-D-erythritol 4-phosphate (MEP). The polypeptide is 1-deoxy-D-xylulose 5-phosphate reductoisomerase (Acinetobacter baumannii (strain ATCC 17978 / DSM 105126 / CIP 53.77 / LMG 1025 / NCDC KC755 / 5377)).